Reading from the N-terminus, the 217-residue chain is Probable transaldolase (217 aa).

Lys-83 acts as the Schiff-base intermediate with substrate in catalysis.

This sequence belongs to the transaldolase family. Type 3B subfamily.

It localises to the cytoplasm. The enzyme catalyses D-sedoheptulose 7-phosphate + D-glyceraldehyde 3-phosphate = D-erythrose 4-phosphate + beta-D-fructose 6-phosphate. Its pathway is carbohydrate degradation; pentose phosphate pathway; D-glyceraldehyde 3-phosphate and beta-D-fructose 6-phosphate from D-ribose 5-phosphate and D-xylulose 5-phosphate (non-oxidative stage): step 2/3. Its function is as follows. Transaldolase is important for the balance of metabolites in the pentose-phosphate pathway. The sequence is that of Probable transaldolase (tal) from Aquifex aeolicus (strain VF5).